Consider the following 212-residue polypeptide: Regulatory protein RecX (212 aa).

Belongs to the RecX family.

It localises to the cytoplasm. Its function is as follows. Modulates RecA activity. In Clostridium botulinum (strain Alaska E43 / Type E3), this protein is Regulatory protein RecX.